Consider the following 168-residue polypeptide: Photosystem I assembly protein Ycf3 (168 aa).

TPR repeat units lie at residues 35 to 68 (AFTY…EIDP), 72 to 105 (SYIL…NPFL), and 120 to 153 (GEQA…TPGN).

This sequence belongs to the Ycf3 family.

It is found in the plastid. It localises to the chloroplast thylakoid membrane. Functionally, essential for the assembly of the photosystem I (PSI) complex. May act as a chaperone-like factor to guide the assembly of the PSI subunits. This Liriodendron tulipifera (Tuliptree) protein is Photosystem I assembly protein Ycf3.